Reading from the N-terminus, the 446-residue chain is N-succinylarginine dihydrolase (446 aa).

Residues 19–28, N110, and 137–138 contribute to the substrate site; these read AGLSFGNVAS and HR. E174 is a catalytic residue. Residue R213 participates in substrate binding. Residue H249 is part of the active site. Substrate is bound by residues D251 and N364. C370 functions as the Nucleophile in the catalytic mechanism.

The protein belongs to the succinylarginine dihydrolase family. As to quaternary structure, homodimer.

The catalysed reaction is N(2)-succinyl-L-arginine + 2 H2O + 2 H(+) = N(2)-succinyl-L-ornithine + 2 NH4(+) + CO2. It participates in amino-acid degradation; L-arginine degradation via AST pathway; L-glutamate and succinate from L-arginine: step 2/5. In terms of biological role, catalyzes the hydrolysis of N(2)-succinylarginine into N(2)-succinylornithine, ammonia and CO(2). The sequence is that of N-succinylarginine dihydrolase from Burkholderia orbicola (strain MC0-3).